Here is a 216-residue protein sequence, read N- to C-terminus: Glycerol-3-phosphate acyltransferase 3 (216 aa).

5 helical membrane passes run 6–26 (LLLV…YLVS), 58–78 (LVAS…GLVI), 92–112 (LLFA…WPVF), 125–145 (FGGM…VLII), and 158–178 (ITGV…SGFP).

It belongs to the PlsY family. In terms of assembly, probably interacts with PlsX.

The protein resides in the cell membrane. The catalysed reaction is an acyl phosphate + sn-glycerol 3-phosphate = a 1-acyl-sn-glycero-3-phosphate + phosphate. Its pathway is lipid metabolism; phospholipid metabolism. Its function is as follows. Catalyzes the transfer of an acyl group from acyl-phosphate (acyl-PO(4)) to glycerol-3-phosphate (G3P) to form lysophosphatidic acid (LPA). This enzyme utilizes acyl-phosphate as fatty acyl donor, but not acyl-CoA or acyl-ACP. In Dehalococcoides mccartyi (strain CBDB1), this protein is Glycerol-3-phosphate acyltransferase 3.